Here is a 520-residue protein sequence, read N- to C-terminus: Cytochrome P450 4F3 (520 aa).

Residues 11–31 (LWPMAASPWLLLLLVGASWLL) form a helical membrane-spanning segment. Residues E328 and C468 each coordinate heme.

This sequence belongs to the cytochrome P450 family. Heme is required as a cofactor. Selectively expressed in blood neutrophils and bone marrow cells. Coexpressed with CYP4F3B in prostate, ileum and trachea. As to expression, selectively expressed in liver and kidney. It is also the predominant CYP4F isoform in trachea and tissues of the gastrointestinal tract.

It is found in the endoplasmic reticulum membrane. Its subcellular location is the microsome membrane. The catalysed reaction is an organic molecule + reduced [NADPH--hemoprotein reductase] + O2 = an alcohol + oxidized [NADPH--hemoprotein reductase] + H2O + H(+). It catalyses the reaction leukotriene B4 + reduced [NADPH--hemoprotein reductase] + O2 = 20-hydroxy-leukotriene B4 + oxidized [NADPH--hemoprotein reductase] + H2O + H(+). The enzyme catalyses 20-hydroxy-leukotriene B4 + reduced [NADPH--hemoprotein reductase] + O2 = 20-oxo-leukotriene B4 + oxidized [NADPH--hemoprotein reductase] + 2 H2O + H(+). It carries out the reaction 20-oxo-leukotriene B4 + reduced [NADPH--hemoprotein reductase] + O2 = 20-carboxy-leukotriene B4 + oxidized [NADPH--hemoprotein reductase] + H2O + 2 H(+). The catalysed reaction is (5Z,8Z,11Z)-eicosatrienoate + reduced [NADPH--hemoprotein reductase] + O2 = 20-hydroxy-(5Z,8Z,11Z)-eicosatrienoate + oxidized [NADPH--hemoprotein reductase] + H2O + H(+). It catalyses the reaction (5Z,8Z,11Z,14Z)-eicosatetraenoate + reduced [NADPH--hemoprotein reductase] + O2 = 20-hydroxy-(5Z,8Z,11Z,14Z)-eicosatetraenoate + oxidized [NADPH--hemoprotein reductase] + H2O + H(+). The enzyme catalyses (5Z,8Z,11Z,14Z,17Z)-eicosapentaenoate + reduced [NADPH--hemoprotein reductase] + O2 = 19-hydroxy-(5Z,8Z,11Z,14Z,17Z)-eicosapentaenoate + oxidized [NADPH--hemoprotein reductase] + H2O + H(+). It carries out the reaction (5Z,8Z,11Z,14Z,17Z)-eicosapentaenoate + reduced [NADPH--hemoprotein reductase] + O2 = 20-hydroxy-(5Z,8Z,11Z,14Z,17Z)-eicosapentaenoate + oxidized [NADPH--hemoprotein reductase] + H2O + H(+). The catalysed reaction is (4Z,7Z,10Z,13Z,16Z,19Z)-docosahexaenoate + reduced [NADPH--hemoprotein reductase] + O2 = 21-hydroxy-(4Z,7Z,10Z,13Z,16Z,19Z)-docosahexaenoate + oxidized [NADPH--hemoprotein reductase] + H2O + H(+). It catalyses the reaction (4Z,7Z,10Z,13Z,16Z,19Z)-docosahexaenoate + reduced [NADPH--hemoprotein reductase] + O2 = 22-hydroxy-(4Z,7Z,10Z,13Z,16Z,19Z)-docosahexaenoate + oxidized [NADPH--hemoprotein reductase] + H2O + H(+). The enzyme catalyses 8,9-epoxy-(5Z,11Z,14Z)-eicosatrienoate + reduced [NADPH--hemoprotein reductase] + O2 = 20-hydroxy-8,9-epoxy-(5Z,11Z,14Z)-eicosatrienoate + oxidized [NADPH--hemoprotein reductase] + H2O + H(+). It carries out the reaction 11,12-epoxy-(5Z,8Z,14Z)-eicosatrienoate + reduced [NADPH--hemoprotein reductase] + O2 = 20-hydroxy-11,12-epoxy-(5Z,8Z,14Z)-eicosatrienoate + oxidized [NADPH--hemoprotein reductase] + H2O + H(+). The catalysed reaction is 14,15-epoxy-(5Z,8Z,11Z)-eicosatrienoate + reduced [NADPH--hemoprotein reductase] + O2 = 20-hydroxy-14,15-epoxy-(5Z,8Z,11Z)-eicosatrienoate + oxidized [NADPH--hemoprotein reductase] + H2O + H(+). It catalyses the reaction 12,13-epoxy-(9Z)-octadecenoate + reduced [NADPH--hemoprotein reductase] + O2 = 18-hydroxy-12,13-epoxy-(9Z)-octadecenoate + oxidized [NADPH--hemoprotein reductase] + H2O + H(+). The enzyme catalyses 9,10-epoxy-(12Z)-octadecenoate + reduced [NADPH--hemoprotein reductase] + O2 = 18-hydroxy-9,10-epoxy-(12Z)-octadecenoate + oxidized [NADPH--hemoprotein reductase] + H2O + H(+). It carries out the reaction 9,10-epoxyoctadecanoate + reduced [NADPH--hemoprotein reductase] + O2 = 18-hydroxy-9,10-epoxy-octadecanoate + oxidized [NADPH--hemoprotein reductase] + H2O + H(+). The catalysed reaction is (12R)-hydroxy-(9Z)-octadecenoate + reduced [NADPH--hemoprotein reductase] + O2 = (12R),18-dihydroxy-(9Z)-octadecenoate + oxidized [NADPH--hemoprotein reductase] + H2O + H(+). It catalyses the reaction 12-hydroxyoctadecanoate + reduced [NADPH--hemoprotein reductase] + O2 = 12,18-dihydroxyoctadecanoate + oxidized [NADPH--hemoprotein reductase] + H2O + H(+). The enzyme catalyses 5-hydroxy-(6E,8Z,11Z,14Z)-eicosatetraenoate + reduced [NADPH--hemoprotein reductase] + O2 = 5,20-dihydroxy-(6E,8Z,11Z,14Z)-eicosatetraenoate + oxidized [NADPH--hemoprotein reductase] + H2O + H(+). It carries out the reaction 8-hydroxy-(5Z,9E,11Z,14Z)-eicosatetraenoate + reduced [NADPH--hemoprotein reductase] + O2 = 8,20-dihydroxy-(5Z,9E,11Z,14Z)-eicosatetraenoate + oxidized [NADPH--hemoprotein reductase] + H2O + H(+). The catalysed reaction is 12-hydroxy-(5Z,8Z,10E,14Z)-eicosatetraenoate + reduced [NADPH--hemoprotein reductase] + O2 = 12,20-dihydroxy-(5Z,8Z,10E,14Z)-eicosatetraenoate + oxidized [NADPH--hemoprotein reductase] + H2O + H(+). It catalyses the reaction 5-hydroxy-(6E,8Z,11Z,14Z,17Z)-eicosapentaenoate + reduced [NADPH--hemoprotein reductase] + O2 = 5,20-dihydroxy-(6E,8Z,11Z,14Z,17Z)-eicosapentaenoate + oxidized [NADPH--hemoprotein reductase] + H2O + H(+). The enzyme catalyses lipoxin A4 + reduced [NADPH--hemoprotein reductase] + O2 = 20-hydroxy-lipoxin A4 + oxidized [NADPH--hemoprotein reductase] + H2O + H(+). It carries out the reaction lipoxin B4 + reduced [NADPH--hemoprotein reductase] + O2 = 20-hydroxy-lipoxin B4 + oxidized [NADPH--hemoprotein reductase] + H2O + H(+). The catalysed reaction is 22-hydroxydocosanoate + reduced [NADPH--hemoprotein reductase] + O2 = 22-oxodocosanoate + oxidized [NADPH--hemoprotein reductase] + 2 H2O + H(+). It catalyses the reaction 22-oxodocosanoate + reduced [NADPH--hemoprotein reductase] + O2 = docosanedioate + oxidized [NADPH--hemoprotein reductase] + H2O + 2 H(+). The enzyme catalyses docosanoate + reduced [NADPH--hemoprotein reductase] + O2 = 22-hydroxydocosanoate + oxidized [NADPH--hemoprotein reductase] + H2O + H(+). It carries out the reaction tetracosanoate + reduced [NADPH--hemoprotein reductase] + O2 = 24-hydroxytetracosanoate + oxidized [NADPH--hemoprotein reductase] + H2O + H(+). The catalysed reaction is hexacosanoate + reduced [NADPH--hemoprotein reductase] + O2 = 26-hydroxyhexacosanoate + oxidized [NADPH--hemoprotein reductase] + H2O + H(+). It catalyses the reaction 26-hydroxyhexacosanoate + reduced [NADPH--hemoprotein reductase] + O2 = 26-oxohexacosanoate + oxidized [NADPH--hemoprotein reductase] + 2 H2O + H(+). The enzyme catalyses 26-oxohexacosanoate + reduced [NADPH--hemoprotein reductase] + O2 = hexacosanedioate + oxidized [NADPH--hemoprotein reductase] + H2O + 2 H(+). It carries out the reaction 3-hydroxyoctadecanoate + reduced [NADPH--hemoprotein reductase] + O2 = 3,18-dihydroxyoctadecanoate + oxidized [NADPH--hemoprotein reductase] + H2O + H(+). The catalysed reaction is 3-hydroxyhexadecanoate + reduced [NADPH--hemoprotein reductase] + O2 = 3,16-dihydroxyhexadecanoate + oxidized [NADPH--hemoprotein reductase] + H2O + H(+). Its pathway is lipid metabolism; leukotriene B4 degradation. It participates in lipid metabolism; arachidonate metabolism. Inhibited by carbon monoxide (CO). In terms of biological role, a cytochrome P450 monooxygenase involved in the metabolism of various endogenous substrates, including fatty acids and their oxygenated derivatives (oxylipins). Mechanistically, uses molecular oxygen inserting one oxygen atom into a substrate, and reducing the second into a water molecule, with two electrons provided by NADPH via cytochrome P450 reductase (CPR; NADPH-ferrihemoprotein reductase). May play a role in inactivation of pro-inflammatory and anti-inflammatory oxylipins during the resolution of inflammation. Functionally, catalyzes predominantly the oxidation of the terminal carbon (omega-oxidation) of oxylipins in myeloid cells, displaying higher affinity for arachidonate metabolite leukotriene B4 (LTB4). Inactivates LTB4 via three successive oxidative transformations to 20-hydroxy-LTB4, then to 20-oxo-LTB4 and to 20-carboxy-LTB4. Has omega-hydroxylase activity toward long-chain fatty acid epoxides with preference for 8,9-epoxy-(5Z,11Z,14Z)-eicosatrienoate (EET) and 9,10-epoxyoctadecanoate. Omega-hydroxylates monohydroxy polyunsaturated fatty acids (PUFAs), including hydroxyeicosatetraenoates (HETEs) and hydroxyeicosapentaenoates (HEPEs), to dihydroxy compounds. Contributes to the degradation of saturated very long-chain fatty acids (VLCFAs) such as docosanoic acid, by catalyzing successive omega-oxidations to the corresponding dicarboxylic acid, thereby initiating chain shortening. Has low hydroxylase activity toward PUFAs. Its function is as follows. Catalyzes predominantly the oxidation of the terminal carbon (omega-oxidation) of polyunsaturated fatty acids (PUFAs). Participates in the conversion of arachidonic acid to 20-hydroxyeicosatetraenoic acid (20-HETE), a signaling molecule acting both as vasoconstrictive and natriuretic with overall effect on arterial blood pressure. Has high omega-hydroxylase activity toward other PUFAs, including eicosatrienoic acid (ETA), eicosapentaenoic acid (EPA) and docosahexaenoic acid (DHA). Can also catalyze the oxidation of the penultimate carbon (omega-1 oxidation) of PUFAs with lower efficiency. Contributes to the degradation of saturated very long-chain fatty acids (VLCFAs) such as docosanoic acid and hexacosanoic acid, by catalyzing successive omega-oxidations to the corresponding dicarboxylic acids, thereby initiating chain shortening. Omega-hydroxylates long-chain 3-hydroxy fatty acids, likely initiating the oxidative conversion to the corresponding 3-hydroxydicarboxylic fatty acids. Has omega-hydroxylase activity toward long-chain fatty acid epoxides with preference for 8,9-epoxy-(5Z,11Z,14Z)-eicosatrienoate (EET) and 9,10-epoxyoctadecanoate. In Homo sapiens (Human), this protein is Cytochrome P450 4F3.